We begin with the raw amino-acid sequence, 447 residues long: Alpha-1,3-mannosyl-glycoprotein 2-beta-N-acetylglucosaminyltransferase (447 aa).

At 1–6 (MLKKQS) the chain is on the cytoplasmic side. Residues 7 to 29 (AGLVLWGAILFVAWNALLLLFFW) form a helical; Signal-anchor for type II membrane protein membrane-spanning segment. At 30–447 (TRPVPSRLPS…TWDGYDPSWT (418 aa)) the chain is on the lumenal side. An intrachain disulfide couples C115 to C145. 4 residues coordinate substrate: R117, D144, H190, and D212. Residue D213 coordinates Mn(2+). C239 and C305 are joined by a disulfide. D291 functions as the Proton acceptor in the catalytic mechanism. Substrate is bound at residue S322.

Belongs to the glycosyltransferase 13 family. Interacts with MGAT4D. Interacts with BRI3. Mn(2+) is required as a cofactor.

It localises to the golgi apparatus membrane. Its subcellular location is the cytoplasm. The protein localises to the perinuclear region. The catalysed reaction is N(4)-(alpha-D-Man-(1-&gt;3)-[alpha-D-Man-(1-&gt;3)-[alpha-D-Man-(1-&gt;6)]-alpha-D-Man-(1-&gt;6)]-beta-D-Man-(1-&gt;4)-beta-D-GlcNAc-(1-&gt;4)-beta-D-GlcNAc)-L-asparaginyl-[protein] (N-glucan mannose isomer 5A1,2) + UDP-N-acetyl-alpha-D-glucosamine = N(4)-{beta-D-GlcNAc-(1-&gt;2)-alpha-D-Man-(1-&gt;3)-[alpha-D-Man-(1-&gt;3)-[alpha-D-Man-(1-&gt;6)]-alpha-D-Man-(1-&gt;6)]-beta-D-Man-(1-&gt;4)-beta-D-GlcNAc-(1-&gt;4)-beta-D-GlcNAc}-L-asparaginyl-[protein] + UDP + H(+). Its pathway is protein modification; protein glycosylation. Initiates complex N-linked carbohydrate formation. Essential for the conversion of high-mannose to hybrid and complex N-glycans. The chain is Alpha-1,3-mannosyl-glycoprotein 2-beta-N-acetylglucosaminyltransferase (MGAT1) from Oryctolagus cuniculus (Rabbit).